Here is a 287-residue protein sequence, read N- to C-terminus: Uricase (287 aa).

Residues K11 and T58 each act as charge relay system in the active site. Urate-binding residues include T58, D59, F160, R177, V219, Q220, and N246. H248 acts as the Charge relay system in catalysis. Positions 285–287 (SRL) match the Microbody targeting signal motif.

This sequence belongs to the uricase family.

It is found in the peroxisome. The enzyme catalyses urate + O2 + H2O = 5-hydroxyisourate + H2O2. Its pathway is purine metabolism; urate degradation; (S)-allantoin from urate: step 1/3. Its function is as follows. Catalyzes the oxidation of uric acid to 5-hydroxyisourate, which is further processed to form (S)-allantoin. This is Uricase (uox) from Dictyostelium discoideum (Social amoeba).